A 149-amino-acid polypeptide reads, in one-letter code: D-aminoacyl-tRNA deacylase (149 aa).

A Gly-cisPro motif, important for rejection of L-amino acids motif is present at residues G137 to P138.

This sequence belongs to the DTD family. As to quaternary structure, homodimer.

Its subcellular location is the cytoplasm. The catalysed reaction is glycyl-tRNA(Ala) + H2O = tRNA(Ala) + glycine + H(+). It carries out the reaction a D-aminoacyl-tRNA + H2O = a tRNA + a D-alpha-amino acid + H(+). Functionally, an aminoacyl-tRNA editing enzyme that deacylates mischarged D-aminoacyl-tRNAs. Also deacylates mischarged glycyl-tRNA(Ala), protecting cells against glycine mischarging by AlaRS. Acts via tRNA-based rather than protein-based catalysis; rejects L-amino acids rather than detecting D-amino acids in the active site. By recycling D-aminoacyl-tRNA to D-amino acids and free tRNA molecules, this enzyme counteracts the toxicity associated with the formation of D-aminoacyl-tRNA entities in vivo and helps enforce protein L-homochirality. The protein is D-aminoacyl-tRNA deacylase of Desulfotalea psychrophila (strain LSv54 / DSM 12343).